The primary structure comprises 119 residues: Large ribosomal subunit protein uL22c (119 aa).

This sequence belongs to the universal ribosomal protein uL22 family. Part of the 50S ribosomal subunit.

Its subcellular location is the plastid. The protein localises to the chloroplast. This protein binds specifically to 23S rRNA. Its function is as follows. The globular domain of the protein is located near the polypeptide exit tunnel on the outside of the subunit, while an extended beta-hairpin is found that lines the wall of the exit tunnel in the center of the 70S ribosome. The sequence is that of Large ribosomal subunit protein uL22c (rpl22) from Anthoceros angustus (Hornwort).